The sequence spans 193 residues: ATP-dependent Clp protease proteolytic subunit (193 aa).

Catalysis depends on Ser98, which acts as the Nucleophile. The active site involves His123.

Belongs to the peptidase S14 family. As to quaternary structure, fourteen ClpP subunits assemble into 2 heptameric rings which stack back to back to give a disk-like structure with a central cavity, resembling the structure of eukaryotic proteasomes.

Its subcellular location is the cytoplasm. The enzyme catalyses Hydrolysis of proteins to small peptides in the presence of ATP and magnesium. alpha-casein is the usual test substrate. In the absence of ATP, only oligopeptides shorter than five residues are hydrolyzed (such as succinyl-Leu-Tyr-|-NHMec, and Leu-Tyr-Leu-|-Tyr-Trp, in which cleavage of the -Tyr-|-Leu- and -Tyr-|-Trp bonds also occurs).. Its function is as follows. Cleaves peptides in various proteins in a process that requires ATP hydrolysis. Has a chymotrypsin-like activity. Plays a major role in the degradation of misfolded proteins. In Histophilus somni (strain 2336) (Haemophilus somnus), this protein is ATP-dependent Clp protease proteolytic subunit.